The primary structure comprises 643 residues: 1-deoxy-D-xylulose-5-phosphate synthase (643 aa).

Thiamine diphosphate contacts are provided by residues His79 and 120-122 (AHA). Residue Asp151 participates in Mg(2+) binding. Residues 152-153 (GS), Asn180, Tyr287, and Glu369 each bind thiamine diphosphate. Asn180 is a binding site for Mg(2+).

It belongs to the transketolase family. DXPS subfamily. As to quaternary structure, homodimer. Requires Mg(2+) as cofactor. It depends on thiamine diphosphate as a cofactor.

The catalysed reaction is D-glyceraldehyde 3-phosphate + pyruvate + H(+) = 1-deoxy-D-xylulose 5-phosphate + CO2. The protein operates within metabolic intermediate biosynthesis; 1-deoxy-D-xylulose 5-phosphate biosynthesis; 1-deoxy-D-xylulose 5-phosphate from D-glyceraldehyde 3-phosphate and pyruvate: step 1/1. Functionally, catalyzes the acyloin condensation reaction between C atoms 2 and 3 of pyruvate and glyceraldehyde 3-phosphate to yield 1-deoxy-D-xylulose-5-phosphate (DXP). The chain is 1-deoxy-D-xylulose-5-phosphate synthase from Maricaulis maris (strain MCS10) (Caulobacter maris).